The chain runs to 430 residues: Probable protein phosphatase 1N (430 aa).

The disordered stretch occupies residues 16 to 65 (CKKKEREKEGREEEEEEEAGRRAPEGPRSLLTAPRRAQRPHGGAEASGGL). Basic and acidic residues predominate over residues 17-26 (KKKEREKEGR). Residues 66 to 326 (RFGASAAQGW…DNMTCILVCF (261 aa)) form the PPM-type phosphatase domain. Mn(2+)-binding residues include D103, G104, D274, and D317. The disordered stretch occupies residues 407–430 (GEKGQDGAGKSNPTHLGSALDMEA).

Belongs to the PP2C family. The cofactor is Mg(2+). It depends on Mn(2+) as a cofactor.

The enzyme catalyses O-phospho-L-seryl-[protein] + H2O = L-seryl-[protein] + phosphate. It catalyses the reaction O-phospho-L-threonyl-[protein] + H2O = L-threonyl-[protein] + phosphate. The polypeptide is Probable protein phosphatase 1N (PPM1N) (Homo sapiens (Human)).